A 210-amino-acid chain; its full sequence is Ribosomal RNA large subunit methyltransferase E (210 aa).

The S-adenosyl-L-methionine site is built by Gly67, Trp69, Asp87, Asp103, and Asp128. The active-site Proton acceptor is Lys168.

Belongs to the class I-like SAM-binding methyltransferase superfamily. RNA methyltransferase RlmE family.

The protein resides in the cytoplasm. It catalyses the reaction uridine(2552) in 23S rRNA + S-adenosyl-L-methionine = 2'-O-methyluridine(2552) in 23S rRNA + S-adenosyl-L-homocysteine + H(+). Its function is as follows. Specifically methylates the uridine in position 2552 of 23S rRNA at the 2'-O position of the ribose in the fully assembled 50S ribosomal subunit. This is Ribosomal RNA large subunit methyltransferase E from Psychrobacter cryohalolentis (strain ATCC BAA-1226 / DSM 17306 / VKM B-2378 / K5).